The following is a 219-amino-acid chain: MRSFGRTGGRPLSPRQKTLMAEKLDTYRIAEGDGPLDLCAMFPGKEAFWLEIGFGGAEHMIAQAAQNPDVGIIGCEPFLEGIAKALGGIEETDLNNVRVWPDDARPLIARMPDQCLDRAFVLFPDPWPKRRQHKRRLVQADFLSILHPKMKPGARLRFATDVKSYADEALLTFVSDGRFEWLAASPDDWRCPPQDHVTTRYESKRLGDCKPVWFDFRIR.

Glu-51, Glu-76, Asp-103, and Asp-125 together coordinate S-adenosyl-L-methionine. Asp-125 is a catalytic residue. Substrate-binding positions include Lys-129, Asp-161, and 199-202 (TRYE).

It belongs to the class I-like SAM-binding methyltransferase superfamily. TrmB family.

The enzyme catalyses guanosine(46) in tRNA + S-adenosyl-L-methionine = N(7)-methylguanosine(46) in tRNA + S-adenosyl-L-homocysteine. The protein operates within tRNA modification; N(7)-methylguanine-tRNA biosynthesis. Catalyzes the formation of N(7)-methylguanine at position 46 (m7G46) in tRNA. This Hyphomonas neptunium (strain ATCC 15444) protein is tRNA (guanine-N(7)-)-methyltransferase.